A 247-amino-acid polypeptide reads, in one-letter code: Large ribosomal subunit protein uL24m (247 aa).

In terms of domain architecture, KOW spans 84–117; sequence FFRGDRIEVLVGKDKGKQGIVTQVIPERNWVIVE.

It belongs to the universal ribosomal protein uL24 family. Component of the mitochondrial ribosome large subunit (39S) which comprises a 16S rRNA and about 50 distinct proteins.

The protein localises to the mitochondrion. This is Large ribosomal subunit protein uL24m (mRpL24) from Drosophila melanogaster (Fruit fly).